The following is a 286-amino-acid chain: MANLKELRSRITSVSSTMQITKAMKMVSASKLSKAQDAITQMRPYSEKLTQLLQDLSATLDDDAGSKYAEEREVKNVLIVAISSNKGLAGAFNTNIIKAVKYKAKNDYKAKNIDIYTVGKKANDILKKEYDIHKNNNEIYDDLSFENASAIAEELMQLFLDEKYDKIVLVYNQFKNAATQIVQHEQFLPIEQFDSEENKQLDYIFEPSKLEIVKDLIPKSLKMQLFKALRDSFASEHGARMTAMHKATENATELRDDLKLSYNKARQASITNEILEIVGGAEALNG.

It belongs to the ATPase gamma chain family. As to quaternary structure, F-type ATPases have 2 components, CF(1) - the catalytic core - and CF(0) - the membrane proton channel. CF(1) has five subunits: alpha(3), beta(3), gamma(1), delta(1), epsilon(1). CF(0) has three main subunits: a, b and c.

The protein localises to the cell inner membrane. Produces ATP from ADP in the presence of a proton gradient across the membrane. The gamma chain is believed to be important in regulating ATPase activity and the flow of protons through the CF(0) complex. This chain is ATP synthase gamma chain, found in Christiangramia forsetii (strain DSM 17595 / CGMCC 1.15422 / KT0803) (Gramella forsetii).